The sequence spans 221 residues: Chalcone--flavanone isomerase (221 aa).

Positions 52, 117, and 193 each coordinate substrate.

Belongs to the chalcone isomerase family. In terms of tissue distribution, flowers.

The enzyme catalyses a chalcone = a flavanone.. The protein operates within secondary metabolite biosynthesis; flavonoid biosynthesis. In terms of biological role, catalyzes the intramolecular cyclization of bicyclic chalcones into tricyclic (S)-flavanones. Responsible for the isomerization of 4,2',4',6'-tetrahydroxychalcone (also termed chalcone) into naringenin. The chain is Chalcone--flavanone isomerase (CHI) from Gentiana triflora (Clustered gentian).